The chain runs to 208 residues: Ribosomal RNA large subunit methyltransferase E (208 aa).

Residues Gly-62, Trp-64, Asp-82, Asp-98, and Asp-123 each coordinate S-adenosyl-L-methionine. Lys-163 acts as the Proton acceptor in catalysis.

This sequence belongs to the class I-like SAM-binding methyltransferase superfamily. RNA methyltransferase RlmE family.

It is found in the cytoplasm. It carries out the reaction uridine(2552) in 23S rRNA + S-adenosyl-L-methionine = 2'-O-methyluridine(2552) in 23S rRNA + S-adenosyl-L-homocysteine + H(+). In terms of biological role, specifically methylates the uridine in position 2552 of 23S rRNA at the 2'-O position of the ribose in the fully assembled 50S ribosomal subunit. This is Ribosomal RNA large subunit methyltransferase E from Mannheimia succiniciproducens (strain KCTC 0769BP / MBEL55E).